A 160-amino-acid polypeptide reads, in one-letter code: Succinate dehydrogenase assembly factor 2-B, mitochondrial (160 aa).

The transit peptide at 1–23 (MLRQLKLTLNISRWIFMPWQRHA) directs the protein to the mitochondrion.

Belongs to the SDHAF2 family. As to quaternary structure, interacts with the flavoprotein subunit within the SDH catalytic dimer.

It is found in the mitochondrion matrix. Functionally, plays an essential role in the assembly of succinate dehydrogenase (SDH), an enzyme complex (also referred to as respiratory complex II) that is a component of both the tricarboxylic acid (TCA) cycle and the mitochondrial electron transport chain, and which couples the oxidation of succinate to fumarate with the reduction of ubiquinone (coenzyme Q) to ubiquinol. Required for flavinylation (covalent attachment of FAD) of the flavoprotein subunit of the SDH catalytic dimer. In Drosophila pseudoobscura pseudoobscura (Fruit fly), this protein is Succinate dehydrogenase assembly factor 2-B, mitochondrial.